Reading from the N-terminus, the 489-residue chain is Glutamyl-tRNA(Gln) amidotransferase subunit A (489 aa).

Active-site charge relay system residues include Lys-80 and Ser-160. The active-site Acyl-ester intermediate is Ser-184.

It belongs to the amidase family. GatA subfamily. In terms of assembly, heterotrimer of A, B and C subunits.

It catalyses the reaction L-glutamyl-tRNA(Gln) + L-glutamine + ATP + H2O = L-glutaminyl-tRNA(Gln) + L-glutamate + ADP + phosphate + H(+). Allows the formation of correctly charged Gln-tRNA(Gln) through the transamidation of misacylated Glu-tRNA(Gln) in organisms which lack glutaminyl-tRNA synthetase. The reaction takes place in the presence of glutamine and ATP through an activated gamma-phospho-Glu-tRNA(Gln). The sequence is that of Glutamyl-tRNA(Gln) amidotransferase subunit A from Wolbachia pipientis wMel.